A 339-amino-acid polypeptide reads, in one-letter code: MINSYKDSGVDKEEGYKAVELMKKNVLKTHNKSVLTNLGSFGAMYELGQYKNPVLISGTDGVGTKLEIAMKQKKYDTVGIDCVAMCVNDVLCHGAKPLFFLDYLACGKLDAEVAAQLVSGVTEGCLQSYAALVGGETAEMPGFYKEGDYDIAGFCVGIVEKEDLIDGSKVKEGNKIIAVASSGFHSNGYSLVRKVFTDYNEKIFLKEYGENVTMGDVLLTPTKIYVKPILKVLEKFNVNGMAHITGGGLFENLPRCMGKNLSPVVFKDKVRVPEIFKLIAERSKIKEEELFGTFNMGVGFTLVVEEKDVETIIELLTSLGETAYEIGHIEKGDHSLCLK.

It belongs to the AIR synthase family.

The protein resides in the cytoplasm. It catalyses the reaction 2-formamido-N(1)-(5-O-phospho-beta-D-ribosyl)acetamidine + ATP = 5-amino-1-(5-phospho-beta-D-ribosyl)imidazole + ADP + phosphate + H(+). It participates in purine metabolism; IMP biosynthesis via de novo pathway; 5-amino-1-(5-phospho-D-ribosyl)imidazole from N(2)-formyl-N(1)-(5-phospho-D-ribosyl)glycinamide: step 2/2. In Fusobacterium nucleatum subsp. nucleatum (strain ATCC 25586 / DSM 15643 / BCRC 10681 / CIP 101130 / JCM 8532 / KCTC 2640 / LMG 13131 / VPI 4355), this protein is Phosphoribosylformylglycinamidine cyclo-ligase.